The primary structure comprises 194 residues: Probable RNA 2'-phosphotransferase (194 aa).

It belongs to the KptA/TPT1 family.

Removes the 2'-phosphate from RNA via an intermediate in which the phosphate is ADP-ribosylated by NAD followed by a presumed transesterification to release the RNA and generate ADP-ribose 1''-2''-cyclic phosphate (APPR&gt;P). May function as an ADP-ribosylase. The polypeptide is Probable RNA 2'-phosphotransferase (Escherichia coli O45:K1 (strain S88 / ExPEC)).